We begin with the raw amino-acid sequence, 218 residues long: Small ribosomal subunit protein uS3 (218 aa).

One can recognise a KH type-2 domain in the interval 38 to 106 (VREYINKRLQ…RVHINIVEIK (69 aa)).

The protein belongs to the universal ribosomal protein uS3 family. In terms of assembly, part of the 30S ribosomal subunit. Forms a tight complex with proteins S10 and S14.

Its function is as follows. Binds the lower part of the 30S subunit head. Binds mRNA in the 70S ribosome, positioning it for translation. The sequence is that of Small ribosomal subunit protein uS3 from Geobacillus thermodenitrificans (strain NG80-2).